The sequence spans 184 residues: Large ribosomal subunit protein uL22 (184 aa).

A disordered region spans residues 160–184 (PEEEVAQKKKISQKKLKKQKLMARE). The segment covering 167-184 (KKKISQKKLKKQKLMARE) has biased composition (basic residues).

Belongs to the universal ribosomal protein uL22 family. As to quaternary structure, component of the large ribosomal subunit.

It localises to the cytoplasm. In terms of biological role, component of the large ribosomal subunit. The ribosome is a large ribonucleoprotein complex responsible for the synthesis of proteins in the cell. The protein is Large ribosomal subunit protein uL22 (RPL17) of Bos taurus (Bovine).